We begin with the raw amino-acid sequence, 368 residues long: tRNA/tmRNA (uracil-C(5))-methyltransferase (368 aa).

S-adenosyl-L-methionine contacts are provided by Gln186, Tyr214, Asn219, Glu235, and Asp295. Cys320 functions as the Nucleophile in the catalytic mechanism. The active-site Proton acceptor is Glu354.

The protein belongs to the class I-like SAM-binding methyltransferase superfamily. RNA M5U methyltransferase family. TrmA subfamily.

The catalysed reaction is uridine(54) in tRNA + S-adenosyl-L-methionine = 5-methyluridine(54) in tRNA + S-adenosyl-L-homocysteine + H(+). It carries out the reaction uridine(341) in tmRNA + S-adenosyl-L-methionine = 5-methyluridine(341) in tmRNA + S-adenosyl-L-homocysteine + H(+). In terms of biological role, dual-specificity methyltransferase that catalyzes the formation of 5-methyluridine at position 54 (m5U54) in all tRNAs, and that of position 341 (m5U341) in tmRNA (transfer-mRNA). The protein is tRNA/tmRNA (uracil-C(5))-methyltransferase of Aromatoleum aromaticum (strain DSM 19018 / LMG 30748 / EbN1) (Azoarcus sp. (strain EbN1)).